Here is a 617-residue protein sequence, read N- to C-terminus: Regulatory solute carrier protein family 1 member 1 (617 aa).

A compositionally biased stretch (polar residues) spans 1-22 (MSSLPTSDGFNHPARSSGQSPD). 3 disordered regions span residues 1-106 (MSSL…EITV), 155-181 (ENQN…VAQQ), and 217-237 (KGNG…IPSS). Composition is skewed to basic and acidic residues over residues 43–52 (SDSDRIEPKA) and 66–83 (SEKK…HASS). 2 stretches are compositionally biased toward polar residues: residues 89–103 (TDQS…SSEE) and 155–165 (ENQNLSQVSDP). Residues 410–412 (QCP) form an involved in post-transcriptional down-regulation of SLC5A1 region. The region spanning 571–611 (IFPATDIDRILRAGFTLQEALGALHRVGGNADLALLVLLAK) is the UBA domain.

In terms of assembly, interacts with YRDC. Expressed in small intestine, kidney and brain.

The protein resides in the cell membrane. It localises to the nucleus. The protein localises to the golgi apparatus. Its subcellular location is the trans-Golgi network. Its function is as follows. Mediates transcriptional and post-transcriptional regulation of SLC5A1. Inhibits a dynamin and PKC-dependent exocytotic pathway of SLC5A1. Also involved in transcriptional regulation of SLC22A2. Exhibits glucose-dependent, short-term inhibition of SLC5A1 and SLC22A2 by inhibiting the release of vesicles from the trans-Golgi network. The protein is Regulatory solute carrier protein family 1 member 1 (RSC1A1) of Homo sapiens (Human).